The sequence spans 182 residues: Ribosome-recycling factor (182 aa).

Belongs to the RRF family.

It is found in the cytoplasm. Its function is as follows. Responsible for the release of ribosomes from messenger RNA at the termination of protein biosynthesis. May increase the efficiency of translation by recycling ribosomes from one round of translation to another. The chain is Ribosome-recycling factor from Thermosynechococcus vestitus (strain NIES-2133 / IAM M-273 / BP-1).